Consider the following 344-residue polypeptide: S-adenosylmethionine:tRNA ribosyltransferase-isomerase (344 aa).

The protein belongs to the QueA family. Monomer.

It is found in the cytoplasm. The enzyme catalyses 7-aminomethyl-7-carbaguanosine(34) in tRNA + S-adenosyl-L-methionine = epoxyqueuosine(34) in tRNA + adenine + L-methionine + 2 H(+). It participates in tRNA modification; tRNA-queuosine biosynthesis. Transfers and isomerizes the ribose moiety from AdoMet to the 7-aminomethyl group of 7-deazaguanine (preQ1-tRNA) to give epoxyqueuosine (oQ-tRNA). This Heliobacterium modesticaldum (strain ATCC 51547 / Ice1) protein is S-adenosylmethionine:tRNA ribosyltransferase-isomerase.